A 35-amino-acid chain; its full sequence is MESVAYILILTLAIGVLFFAIAFREPPRIEKKEEK.

The chain crosses the membrane as a helical span at residues 3 to 23 (SVAYILILTLAIGVLFFAIAF).

The protein belongs to the PsbT family. As to quaternary structure, PSII is composed of 1 copy each of membrane proteins PsbA, PsbB, PsbC, PsbD, PsbE, PsbF, PsbH, PsbI, PsbJ, PsbK, PsbL, PsbM, PsbT, PsbX, PsbY, PsbZ, Psb30/Ycf12, peripheral proteins PsbO, CyanoQ (PsbQ), PsbU, PsbV and a large number of cofactors. It forms dimeric complexes.

It localises to the cellular thylakoid membrane. Found at the monomer-monomer interface of the photosystem II (PS II) dimer, plays a role in assembly and dimerization of PSII. PSII is a light-driven water plastoquinone oxidoreductase, using light energy to abstract electrons from H(2)O, generating a proton gradient subsequently used for ATP formation. This Nostoc sp. (strain PCC 7120 / SAG 25.82 / UTEX 2576) protein is Photosystem II reaction center protein T.